The following is a 128-amino-acid chain: Large ribosomal subunit protein eL22 (128 aa).

Position 62 is a phosphothreonine (Thr62). The residue at position 66 (Ser66) is a Phosphoserine. Position 69 is an N6-succinyllysine (Lys69).

Belongs to the eukaryotic ribosomal protein eL22 family. As to quaternary structure, component of the large ribosomal subunit.

It is found in the cytoplasm. In terms of biological role, component of the large ribosomal subunit. The ribosome is a large ribonucleoprotein complex responsible for the synthesis of proteins in the cell. The polypeptide is Large ribosomal subunit protein eL22 (RPL22) (Oryctolagus cuniculus (Rabbit)).